The following is a 564-amino-acid chain: uncharacterized protein (564 aa).

Positions 1 to 21 (MRRIGAITALSLPVLLSLLYS) are cleaved as a signal peptide. The N-palmitoyl cysteine moiety is linked to residue cysteine 22. A lipid anchor (S-diacylglycerol cysteine) is attached at cysteine 22.

Its subcellular location is the cell membrane. This is an uncharacterized protein from Aquifex aeolicus (strain VF5).